Consider the following 780-residue polypeptide: ATP-dependent 6-phosphofructokinase, muscle type (780 aa).

Threonine 2 is modified (N-acetylthreonine). The segment at 2–390 (THEEHHAAKT…NWEVYKLLAH (389 aa)) is N-terminal catalytic PFK domain 1. ATP contacts are provided by residues glycine 25, 88-89 (RC), and 118-121 (GDGS). Position 119 (aspartate 119) interacts with Mg(2+). A Phosphoserine modification is found at serine 133. Substrate is bound by residues 164-166 (SID), arginine 201, 208-210 (MGR), glutamate 264, arginine 292, and 298-301 (HVQR). The active-site Proton acceptor is the aspartate 166. At serine 377 the chain carries Phosphoserine. Residues 391-401 (VRPPVSKSGSH) are interdomain linker. The tract at residues 402 to 780 (TVAVMNVGAP…TRKRSGEGAV (379 aa)) is C-terminal regulatory PFK domain 2. Residues arginine 471 and 528-532 (TVSNN) contribute to the beta-D-fructose 2,6-bisphosphate site. The O-linked (GlcNAc) serine glycan is linked to serine 530. N6-(2-hydroxyisobutyryl)lysine is present on lysine 557. Beta-D-fructose 2,6-bisphosphate contacts are provided by residues arginine 566, 573 to 575 (MGG), glutamate 629, arginine 655, and 661 to 664 (HMQQ). Phosphoserine is present on serine 667. Arginine 735 lines the beta-D-fructose 2,6-bisphosphate pocket. A Phosphoserine modification is found at serine 775.

The protein belongs to the phosphofructokinase type A (PFKA) family. ATP-dependent PFK group I subfamily. Eukaryotic two domain clade 'E' sub-subfamily. Homo- and heterotetramers. Phosphofructokinase (PFK) enzyme functions as a tetramer composed of different combinations of 3 types of subunits, called PFKM (M), PFKL (L) and PFKP (P). The composition of the PFK tetramer differs according to the tissue type it is present in. The kinetic and regulatory properties of the tetrameric enzyme are dependent on the subunit composition, hence can vary across tissues. Interacts (via C-terminus) with HK1 (via N-terminal spermatogenic cell-specific region). Mg(2+) is required as a cofactor. Post-translationally, glcNAcylation decreases enzyme activity.

The protein localises to the cytoplasm. It carries out the reaction beta-D-fructose 6-phosphate + ATP = beta-D-fructose 1,6-bisphosphate + ADP + H(+). It functions in the pathway carbohydrate degradation; glycolysis; D-glyceraldehyde 3-phosphate and glycerone phosphate from D-glucose: step 3/4. Its activity is regulated as follows. Allosterically activated by ADP, AMP, or fructose 2,6-bisphosphate, and allosterically inhibited by ATP or citrate. Functionally, catalyzes the phosphorylation of D-fructose 6-phosphate to fructose 1,6-bisphosphate by ATP, the first committing step of glycolysis. The protein is ATP-dependent 6-phosphofructokinase, muscle type (PFKM) of Macaca fascicularis (Crab-eating macaque).